We begin with the raw amino-acid sequence, 191 residues long: Cytochrome c oxidase subunit 6b-1 (191 aa).

The span at 1 to 14 shows a compositional bias: polar residues; it reads MADAVNAQTPSLSE. The interval 1–126 is disordered; the sequence is MADAVNAQTP…IKLETAPADF (126 aa). Ala2 is modified (N-acetylalanine). Basic and acidic residues-rich tracts occupy residues 16-37 and 45-56; these read YHLEKEVKQDTSAKPVEVKEVA and EEVKTEQAKEES. Positions 72–98 are enriched in low complexity; that stretch reads APESTEVASEAPAAAEDNAEETPAAAE. Residues 99–114 show a composition bias toward acidic residues; sequence ENNDENASEEVAEETP. The 44-residue stretch at 134–177 folds into the CHCH domain; the sequence is TRHCFTRYVEYHRCVAAKGDDAPECDKFAKFYRSLCPSEWVDRW. The short motif at 137-147 is the Cx9C motif element; sequence CFTRYVEYHRC. 2 disulfide bridges follow: Cys137/Cys169 and Cys147/Cys158. The Cx10C motif motif lies at 158-169; that stretch reads CDKFAKFYRSLC.

Belongs to the cytochrome c oxidase subunit 6B (TC 3.D.4.8) family. As to expression, expressed in the whole plant.

It localises to the mitochondrion. Functionally, this protein is one of the nuclear-coded polypeptide chains of cytochrome c oxidase, the terminal oxidase in mitochondrial electron transport. This protein may be one of the heme-binding subunits of the oxidase. The protein is Cytochrome c oxidase subunit 6b-1 (COX6B-1) of Arabidopsis thaliana (Mouse-ear cress).